A 953-amino-acid chain; its full sequence is Lysosomal alpha-glucosidase (953 aa).

Positions Met1–Leu27 are cleaved as a signal peptide. Residues Gly28–Gln69 constitute a propeptide that is removed on maturation. The P-type domain maps to Thr80–Pro131. Intrachain disulfides connect Cys82-Cys109, Cys92-Cys108, and Cys103-Cys127. Residues Asn140, Asn233, and Asn390 are each glycosylated (N-linked (GlcNAc...) asparagine). Substrate is bound at residue Asp404. Residue Asn470 is glycosylated (N-linked (GlcNAc...) asparagine). Asp518 serves as the catalytic Nucleophile. Glu521 is an active-site residue. Cys533 and Cys558 are joined by a disulfide. Arg600 and Asp616 together coordinate substrate. Cys647 and Cys658 are disulfide-bonded. His674 serves as a coordination point for substrate. N-linked (GlcNAc...) asparagine glycans are attached at residues Asn883, Asn926, and Asn933.

The protein belongs to the glycosyl hydrolase 31 family.

The protein resides in the lysosome. It localises to the lysosome membrane. It catalyses the reaction Hydrolysis of terminal, non-reducing (1-&gt;4)-linked alpha-D-glucose residues with release of alpha-D-glucose.. Its function is as follows. Essential for the degradation of glycogen in lysosomes. Has highest activity on alpha-1,4-linked glycosidic linkages, but can also hydrolyze alpha-1,6-linked glucans. This is Lysosomal alpha-glucosidase (Gaa) from Mus musculus (Mouse).